Consider the following 163-residue polypeptide: Leptin (163 aa).

Residues 1-18 (MCWRPLCRLWSYLVYVQA) form the signal peptide. A disulfide bond links Cys-113 and Cys-163.

This sequence belongs to the leptin family. Not exclusively localized in adipose tissue but is also expressed in liver.

It is found in the secreted. Its function is as follows. Key player in the regulation of energy balance and body weight control. Once released into the circulation, has central and peripheral effects by binding LEPR, found in many tissues, which results in the activation of several major signaling pathways. The protein is Leptin (LEP) of Gallus gallus (Chicken).